A 610-amino-acid polypeptide reads, in one-letter code: UvrABC system protein C (610 aa).

One can recognise a GIY-YIG domain in the interval 16–94 (SQPGVYRMYD…IKLYQPRYNV (79 aa)). Positions 204–239 (QQVLTQLITRMEEASQQLHFEDAARIRDQIQAVRRV) constitute a UVR domain.

This sequence belongs to the UvrC family. In terms of assembly, interacts with UvrB in an incision complex.

It localises to the cytoplasm. Functionally, the UvrABC repair system catalyzes the recognition and processing of DNA lesions. UvrC both incises the 5' and 3' sides of the lesion. The N-terminal half is responsible for the 3' incision and the C-terminal half is responsible for the 5' incision. This chain is UvrABC system protein C, found in Yersinia pseudotuberculosis serotype I (strain IP32953).